The sequence spans 951 residues: Spliceosome associated factor 3, U4/U6 recycling protein (951 aa).

The interval 1 to 58 (MAATGNEEQTLLPDIEEEAEGMEREMESEDDEEEGMGVEHSEEEDEEDTSEDERENEA) is disordered. The span at 14 to 56 (DIEEEAEGMEREMESEDDEEEGMGVEHSEEEDEEDTSEDEREN) shows a compositional bias: acidic residues. HAT repeat units lie at residues 88-120 (GKLHRLRKARQKMSELFPLTEEIWLDWLKDEIR), 126-157 (SDREKVYELFERAIKDYVCPEIWLEYVQYSIG), 163-199 (GGIERVRSIFERALTAVGLHMTKGASIWEAYREFEIV), 222-255 (AQLERIHTLFRRQLAVPLMDMEGTYAEYSDWADD), 304-336 (GDPARVQIIFERALAENCLVPDLWIKYTTYLDR), 339-371 (KIKDLVLSAHERAVRNCPWTMGLWKSYLLALER), 374-410 (ADHQTVKDVFEKALNAGFIQATDYVEIWQSYLDYLRR), and 467-500 (KNMQKARELWDSIMTKGNAKYANMWLEYYNLERS). Positions 517 to 941 (CTSDYPEHVC…LDTQTKSLSN (425 aa)) are necessary and sufficient for U6 snRNA binding. The stretch at 533–593 (ERVEGSLEDW…VKADKKAQKK (61 aa)) forms a coiled coil. Residues 567–581 (EALHARQEEEKAEQR) show a composition bias toward basic and acidic residues. Residues 567 to 686 (EALHARQEEE…HDMPKEQRKD (120 aa)) form a disordered region. Over residues 582–596 (RKVKADKKAQKKGQK) the composition is skewed to basic residues. Residues 608 to 619 (DDDEEEWGEEAE) are compositionally biased toward acidic residues. A compositionally biased stretch (basic and acidic residues) spans 674–686 (RQPHDMPKEQRKD). 2 RRM domains span residues 688 to 766 (NCVF…PCVD) and 785 to 862 (HKIF…ISNP). Residues 905–938 (RQSTPDAKAENGTISAPHATVTDGETSLDTQTKS) form a disordered region. Residues 927–938 (DGETSLDTQTKS) show a composition bias toward polar residues.

The protein localises to the nucleus. It is found in the nucleoplasm. It localises to the cajal body. The protein resides in the nucleus speckle. Its subcellular location is the cytoplasm. Its function is as follows. U6 snRNP-binding protein that functions as a recycling factor of the splicing machinery. Promotes the initial reassembly of U4 and U6 snRNPs following their ejection from the spliceosome during its maturation. May also function as a substrate targeting factor for deubiquitinases and mediate the deubiquitination of components of the spliceosome and histones. This is Spliceosome associated factor 3, U4/U6 recycling protein from Danio rerio (Zebrafish).